We begin with the raw amino-acid sequence, 335 residues long: DNA-directed RNA polymerase subunit alpha (335 aa).

An alpha N-terminal domain (alpha-NTD) region spans residues 1–231 (MVREKVTVST…DLFIPFLHME (231 aa)). Residues 262–335 (KKKLSLESIF…FALDLPKNLN (74 aa)) form an alpha C-terminal domain (alpha-CTD) region.

Belongs to the RNA polymerase alpha chain family. As to quaternary structure, in plastids the minimal PEP RNA polymerase catalytic core is composed of four subunits: alpha, beta, beta', and beta''. When a (nuclear-encoded) sigma factor is associated with the core the holoenzyme is formed, which can initiate transcription.

The protein localises to the plastid. It catalyses the reaction RNA(n) + a ribonucleoside 5'-triphosphate = RNA(n+1) + diphosphate. In terms of biological role, DNA-dependent RNA polymerase catalyzes the transcription of DNA into RNA using the four ribonucleoside triphosphates as substrates. This chain is DNA-directed RNA polymerase subunit alpha, found in Cuscuta reflexa (Southern Asian dodder).